A 170-amino-acid polypeptide reads, in one-letter code: MGKRYFCDYCDRSFQDNLHNRKKHLNGLQHLKAKKVWYDMFRDAAAILLDEQNKRPCRKFLLTGQCDFGSNCRFSHMSERDLQELSIQVEEERRAREWLLDAPELPEGHLEDWLEKRAKRLSSAPSSRAEPIRTTVFQYPVGWPPVQELPPSLRAPPPGGWPLQPRVQWG.

The C3H1-type zinc-finger motif lies at 51–79 (EQNKRPCRKFLLTGQCDFGSNCRFSHMSE). Residues 150 to 170 (PPSLRAPPPGGWPLQPRVQWG) form a disordered region.

As to quaternary structure, component of the U11/U12 snRNPs that are part of the U12-type spliceosome. Not found in the major spliceosome.

Its subcellular location is the nucleus. In Homo sapiens (Human), this protein is Zinc finger matrin-type protein 5 (ZMAT5).